We begin with the raw amino-acid sequence, 433 residues long: Citrate synthase, mitochondrial (433 aa).

Active-site residues include His274 and His320. Residue Arg329 coordinates oxaloacetate. The active site involves Asp375. Residues Arg401 and Arg421 each coordinate oxaloacetate.

This sequence belongs to the citrate synthase family. Homodimer.

It is found in the mitochondrion matrix. It carries out the reaction oxaloacetate + acetyl-CoA + H2O = citrate + CoA + H(+). Its pathway is carbohydrate metabolism; tricarboxylic acid cycle; isocitrate from oxaloacetate: step 1/2. Its function is as follows. Key enzyme of the Krebs tricarboxylic acid cycle which catalyzes the synthesis of citrate from acetyl coenzyme A and oxaloacetate. In Gallus gallus (Chicken), this protein is Citrate synthase, mitochondrial (CS).